The chain runs to 723 residues: Catalase-peroxidase (723 aa).

The segment at residues W98–Y226 is a cross-link (tryptophyl-tyrosyl-methioninium (Trp-Tyr) (with M-252)). The active-site Proton acceptor is the H99. The segment at residues Y226–M252 is a cross-link (tryptophyl-tyrosyl-methioninium (Tyr-Met) (with W-98)). H267 is a heme b binding site.

It belongs to the peroxidase family. Peroxidase/catalase subfamily. Homodimer or homotetramer. Requires heme b as cofactor. Post-translationally, formation of the three residue Trp-Tyr-Met cross-link is important for the catalase, but not the peroxidase activity of the enzyme.

The enzyme catalyses H2O2 + AH2 = A + 2 H2O. The catalysed reaction is 2 H2O2 = O2 + 2 H2O. Functionally, bifunctional enzyme with both catalase and broad-spectrum peroxidase activity. The polypeptide is Catalase-peroxidase (Vibrio vulnificus (strain YJ016)).